We begin with the raw amino-acid sequence, 848 residues long: Heat shock protein 70 homolog lhs1 (848 aa).

Residues 1–21 form the signal peptide; it reads MKRSVLTIILFFSCQFWHAFA. 11 N-linked (GlcNAc...) asparagine glycosylation sites follow: asparagine 134, asparagine 247, asparagine 359, asparagine 457, asparagine 462, asparagine 488, asparagine 555, asparagine 632, asparagine 678, asparagine 733, and asparagine 817. A disordered region spans residues 784-848; the sequence is KLKAKKGASS…QQEIDDSDEL (65 aa). Composition is skewed to polar residues over residues 807-822 and 829-840; these read TNDIEPTTALNSTSTQ and ASVTQRPSSLQQ. Positions 845–848 match the Prevents secretion from ER motif; sequence SDEL.

Belongs to the heat shock protein 70 family.

It localises to the endoplasmic reticulum lumen. It carries out the reaction ATP + H2O = ADP + phosphate + H(+). Its function is as follows. Chaperone required for protein translocation and folding in the endoplasmic reticulum. This Schizosaccharomyces pombe (strain 972 / ATCC 24843) (Fission yeast) protein is Heat shock protein 70 homolog lhs1.